We begin with the raw amino-acid sequence, 231 residues long: Ribonuclease 3 (231 aa).

An RNase III domain is found at 6 to 135 (AAMLKERFGI…FVGALYLDQG (130 aa)). Residue glutamate 48 coordinates Mg(2+). The active site involves aspartate 52. The Mg(2+) site is built by aspartate 121 and glutamate 124. Glutamate 124 is a catalytic residue. Positions 161–230 (DYKTTLQEYL…ARQAYSQLQQ (70 aa)) constitute a DRBM domain. The interval 209–231 (WGHSKKEAEQSAARQAYSQLQQK) is disordered. The span at 220-231 (AARQAYSQLQQK) shows a compositional bias: polar residues.

It belongs to the ribonuclease III family. In terms of assembly, homodimer. It depends on Mg(2+) as a cofactor.

The protein localises to the cytoplasm. It carries out the reaction Endonucleolytic cleavage to 5'-phosphomonoester.. Functionally, digests double-stranded RNA. Involved in the processing of primary rRNA transcript to yield the immediate precursors to the large and small rRNAs (23S and 16S). Processes some mRNAs, and tRNAs when they are encoded in the rRNA operon. Processes pre-crRNA and tracrRNA of type II CRISPR loci if present in the organism. This is Ribonuclease 3 from Lactiplantibacillus plantarum (strain ATCC BAA-793 / NCIMB 8826 / WCFS1) (Lactobacillus plantarum).